The sequence spans 667 residues: High affinity sulfate transporter 1 (667 aa).

The tract at residues E16–L38 is disordered. Transmembrane regions (helical) follow at residues G106–A126, L131–G151, I156–I176, L185–C205, G208–I228, W269–A289, F296–I316, G350–I370, V425–F445, V452–L472, and G486–I506. The STAS domain maps to Q537–Y660.

It belongs to the SLC26A/SulP transporter (TC 2.A.53) family.

It localises to the membrane. Functionally, high-affinity H(+)/sulfate cotransporter that mediates the uptake of sulfate by plant roots from low concentrations of sulfate in the soil solution. The sequence is that of High affinity sulfate transporter 1 (ST1) from Stylosanthes hamata (Caribbean stylo).